Consider the following 682-residue polypeptide: Potassium-transporting ATPase ATP-binding subunit (682 aa).

The next 4 helical transmembrane spans lie at 34–54, 62–82, 219–239, and 254–274; these read PVMF…IAMA, ALFS…ANFA, IALT…TATL, and VLVA…LSAI. Asp307 acts as the 4-aspartylphosphate intermediate in catalysis. Residues Asp344, Glu348, 377–384, and Lys395 each bind ATP; that span reads FTAQSRMS. 2 residues coordinate Mg(2+): Asp518 and Asp522. 3 consecutive transmembrane segments (helical) span residues 588 to 608, 616 to 636, and 656 to 676; these read FAII…LNIM, AILS…PLAL, and IYGL…DLLL.

Belongs to the cation transport ATPase (P-type) (TC 3.A.3) family. Type IA subfamily. The system is composed of three essential subunits: KdpA, KdpB and KdpC.

Its subcellular location is the cell inner membrane. It catalyses the reaction K(+)(out) + ATP + H2O = K(+)(in) + ADP + phosphate + H(+). Its function is as follows. Part of the high-affinity ATP-driven potassium transport (or Kdp) system, which catalyzes the hydrolysis of ATP coupled with the electrogenic transport of potassium into the cytoplasm. This subunit is responsible for energy coupling to the transport system and for the release of the potassium ions to the cytoplasm. The chain is Potassium-transporting ATPase ATP-binding subunit from Escherichia coli (strain UTI89 / UPEC).